The chain runs to 486 residues: MKALDQLSFDNRFARLGDAFSTQVLPEPIAEPRLVVASESAMALLDLDPAHAELPVFAELFSGHKLWEEADPRAMVYSGHQFGSYNPRLGDGRGLLLAEVLNDAGEHWDLHLKGAGQTPYSRMGDGRAVLRSSIREFLASEALHALGIPTSRALCVIGSSTPVWRETRESAAMLTRLAQSHVRFGHFEYFYYTKQPEQQRVLIDHVLEQHYPECRDAEQPYLAMFRTIVERNAELIARWQAYGFCHGVMNTDNMSILGITFDFGPYAFLDDFDANFICNHSDDRGRYSYANQVPIAHWNLSALAQALTTVIEVEPLKETLGLFLPLYQAHYLDLMRRRLGLTTAEEDDMALVERLLQCMQRGGVDYSLFFRKLGEQPAADALKVVRDDFIDLAAFDAWGADYLARCDREPGNAEGRRERMHAVNPLYVLRNYLAQKAIEAAEAGDYSEVRRLHQVLSHPFEEQPGMQAYAERPPEWGKHLEISCSS.

The ATP site is built by glycine 90, glycine 92, arginine 93, lysine 113, aspartate 125, glycine 126, arginine 176, and arginine 183. The active-site Proton acceptor is aspartate 252. Mg(2+)-binding residues include asparagine 253 and aspartate 262. Aspartate 262 serves as a coordination point for ATP.

It belongs to the SELO family. Mg(2+) serves as cofactor. Requires Mn(2+) as cofactor.

It catalyses the reaction L-seryl-[protein] + ATP = 3-O-(5'-adenylyl)-L-seryl-[protein] + diphosphate. The enzyme catalyses L-threonyl-[protein] + ATP = 3-O-(5'-adenylyl)-L-threonyl-[protein] + diphosphate. The catalysed reaction is L-tyrosyl-[protein] + ATP = O-(5'-adenylyl)-L-tyrosyl-[protein] + diphosphate. It carries out the reaction L-histidyl-[protein] + UTP = N(tele)-(5'-uridylyl)-L-histidyl-[protein] + diphosphate. It catalyses the reaction L-seryl-[protein] + UTP = O-(5'-uridylyl)-L-seryl-[protein] + diphosphate. The enzyme catalyses L-tyrosyl-[protein] + UTP = O-(5'-uridylyl)-L-tyrosyl-[protein] + diphosphate. Nucleotidyltransferase involved in the post-translational modification of proteins. It can catalyze the addition of adenosine monophosphate (AMP) or uridine monophosphate (UMP) to a protein, resulting in modifications known as AMPylation and UMPylation. The polypeptide is Protein nucleotidyltransferase YdiU (Pseudomonas putida (strain GB-1)).